A 331-amino-acid chain; its full sequence is tRNA U34 carboxymethyltransferase (331 aa).

Residues K91, W105, K110, G130, 152–154 (DPS), 181–182 (IE), M196, Y200, and R315 each bind carboxy-S-adenosyl-L-methionine.

This sequence belongs to the class I-like SAM-binding methyltransferase superfamily. CmoB family. Homotetramer.

It carries out the reaction carboxy-S-adenosyl-L-methionine + 5-hydroxyuridine(34) in tRNA = 5-carboxymethoxyuridine(34) in tRNA + S-adenosyl-L-homocysteine + H(+). Its function is as follows. Catalyzes carboxymethyl transfer from carboxy-S-adenosyl-L-methionine (Cx-SAM) to 5-hydroxyuridine (ho5U) to form 5-carboxymethoxyuridine (cmo5U) at position 34 in tRNAs. The polypeptide is tRNA U34 carboxymethyltransferase (Shewanella baltica (strain OS185)).